The following is a 140-amino-acid chain: Large ribosomal subunit protein uL11 (140 aa).

It belongs to the universal ribosomal protein uL11 family. Part of the ribosomal stalk of the 50S ribosomal subunit. Interacts with L10 and the large rRNA to form the base of the stalk. L10 forms an elongated spine to which L12 dimers bind in a sequential fashion forming a multimeric L10(L12)X complex. Post-translationally, one or more lysine residues are methylated.

Its function is as follows. Forms part of the ribosomal stalk which helps the ribosome interact with GTP-bound translation factors. The sequence is that of Large ribosomal subunit protein uL11 from Staphylococcus saprophyticus subsp. saprophyticus (strain ATCC 15305 / DSM 20229 / NCIMB 8711 / NCTC 7292 / S-41).